A 423-amino-acid chain; its full sequence is Histidine--tRNA ligase 2 (423 aa).

This sequence belongs to the class-II aminoacyl-tRNA synthetase family. Homodimer.

The protein localises to the cytoplasm. The catalysed reaction is tRNA(His) + L-histidine + ATP = L-histidyl-tRNA(His) + AMP + diphosphate + H(+). The chain is Histidine--tRNA ligase 2 from Bacillus anthracis.